Reading from the N-terminus, the 150-residue chain is 3-hydroxyacyl-[acyl-carrier-protein] dehydratase FabZ (150 aa).

Residue His52 is part of the active site.

This sequence belongs to the thioester dehydratase family. FabZ subfamily.

It is found in the cytoplasm. It carries out the reaction a (3R)-hydroxyacyl-[ACP] = a (2E)-enoyl-[ACP] + H2O. Functionally, involved in unsaturated fatty acids biosynthesis. Catalyzes the dehydration of short chain beta-hydroxyacyl-ACPs and long chain saturated and unsaturated beta-hydroxyacyl-ACPs. This chain is 3-hydroxyacyl-[acyl-carrier-protein] dehydratase FabZ, found in Cupriavidus metallidurans (strain ATCC 43123 / DSM 2839 / NBRC 102507 / CH34) (Ralstonia metallidurans).